We begin with the raw amino-acid sequence, 280 residues long: MPWRPPAHSVPGREGQFYAATFHAHAAFCGCGGFIEHLNSIHPRFLGAGGPPPPPPALRRALPAPEGPGGPPQHAPPNPPPEGDHQPPRRGGGAGGAGDGHAGDGDAAEEYGPEDLDLLFAAAAEDDMLSTTRARSPPTRYPSPVRSLESYKSVTRQGSDRKQFFTSGTKDVDCLQKEVLKECRNTHQMMKIFRQVLQSAQLSTPDPRAWPESKEAPTLFSGLSKTAKTRRRVKKKPLSSKNKHTKKKKRSYSSSSPSSKDNTSESSNEDSESCSETYSN.

2 disordered regions span residues 46 to 167 (LGAG…FFTS) and 200 to 280 (AQLS…TYSN). Residues 65 to 81 (PEGPGGPPQHAPPNPPP) are compositionally biased toward pro residues. Gly residues predominate over residues 90 to 100 (RGGGAGGAGDG). The span at 106–117 (DAAEEYGPEDLD) shows a compositional bias: acidic residues. Basic residues predominate over residues 227–251 (AKTRRRVKKKPLSSKNKHTKKKKRS). A compositionally biased stretch (low complexity) spans 252-266 (YSSSSPSSKDNTSES).

In terms of processing, phosphorylated at C-terminal serines.

The protein is Probable protein VP2 of Homo sapiens (Human).